The sequence spans 220 residues: MRQITNLGRNIENKSFSIIDEEAGPHSFAQEEWEVVRRIIHATADFDYKNITKIHPQAIDSGIQALKKGCPIVCDVQMILSGLNPERLKVYGCKTYCFISDEDVIENAKRKNSTRAIESIQKANSFNLLNESIIVIGNAPTALLEIEKLIRQEGIKPALIVGVPVGFVSAKESKESILKLEYYNVTSIPYILTMGRKGGSTIAVAILHALLLLSSKRGER.

Substrate-binding residues include serine 15 and arginine 38. Histidine 41 (proton donor/acceptor) is an active-site residue.

Belongs to the CobH/CbiC family. As to quaternary structure, homodimer.

The catalysed reaction is Co-precorrin-8X = cob(II)yrinate. The protein operates within cofactor biosynthesis; adenosylcobalamin biosynthesis; cob(II)yrinate a,c-diamide from sirohydrochlorin (anaerobic route): step 9/10. Its function is as follows. Catalyzes the conversion of cobalt-precorrin-8 to cobyrinate. This Leptospira interrogans serogroup Icterohaemorrhagiae serovar Lai (strain 56601) protein is Cobalt-precorrin-8 methylmutase (cbiC).